Here is a 463-residue protein sequence, read N- to C-terminus: Argininosuccinate lyase (463 aa).

This sequence belongs to the lyase 1 family. Argininosuccinate lyase subfamily.

It is found in the cytoplasm. The catalysed reaction is 2-(N(omega)-L-arginino)succinate = fumarate + L-arginine. It functions in the pathway amino-acid biosynthesis; L-arginine biosynthesis; L-arginine from L-ornithine and carbamoyl phosphate: step 3/3. This chain is Argininosuccinate lyase, found in Streptococcus pneumoniae (strain JJA).